Consider the following 35-residue polypeptide: MTFAELGMAFWHDLAAPVIAGILASMIVNWLNKRK.

Residues 10 to 32 (FWHDLAAPVIAGILASMIVNWLN) traverse the membrane as a helical segment.

This sequence belongs to the Ldr toxic peptide family.

It is found in the cell inner membrane. Functionally, toxic component of a type I toxin-antitoxin (TA) system. Overexpression causes rapid cell killing and nucleoid condensation of the host cell. Overexpression induces stress-response and a number of membrane protein genes. May inhibit ATP synthesis due to its insertion in the cell inner membrane. This Escherichia coli (strain K12) protein is Small toxic polypeptide LdrD (ldrD).